Consider the following 107-residue polypeptide: U1-lycotoxin-Ls1o (107 aa).

The signal sequence occupies residues 1–20; it reads MMKVLVVVALLVTLISYSSS. A propeptide spanning residues 21–41 is cleaved from the precursor; that stretch reads EGIDDLEADELLSLMANEQTR. Disulfide bonds link Cys-44/Cys-59, Cys-51/Cys-68, Cys-58/Cys-86, and Cys-70/Cys-84.

The protein belongs to the neurotoxin 19 (CSTX) family. 04 (U1-Lctx) subfamily. As to expression, expressed by the venom gland.

It localises to the secreted. The sequence is that of U1-lycotoxin-Ls1o from Lycosa singoriensis (Wolf spider).